The primary structure comprises 475 residues: Tubulin gamma chain (475 aa).

Residue 142 to 148 (AGGTGSG) participates in GTP binding. The tract at residues 455–475 (GKQVSGEGNTSGTVDSRVGAS) is disordered.

Belongs to the tubulin family.

It is found in the cytoplasm. It localises to the cytoskeleton. The protein resides in the microtubule organizing center. Functionally, tubulin is the major constituent of microtubules. The gamma chain is found at microtubule organizing centers (MTOC) such as the spindle poles, suggesting that it is involved in the minus-end nucleation of microtubule assembly. This is Tubulin gamma chain (TUBG1) from Physcomitrium patens (Spreading-leaved earth moss).